The sequence spans 1538 residues: Phenolphthiocerol/phthiocerol polyketide synthase subunit B (1538 aa).

The Ketosynthase family 3 (KS3) domain occupies Ala33–Gln455. Residues Cys205, His340, and His377 each act as for beta-ketoacyl synthase activity in the active site. Residues Asp553–His882 are acyltransferase. Residue Ser649 is the For malonyltransferase activity of the active site. An NADP(+)-binding site is contributed by Ser1153–Leu1196. Residues Ser1153–Ser1328 are beta-ketoacyl reductase. A Carrier domain is found at Asp1423–Leu1498. At Ser1458 the chain carries O-(pantetheine 4'-phosphoryl)serine.

NADP(+) serves as cofactor. The cofactor is pantetheine 4'-phosphate.

The enzyme catalyses icosanoyl-[(phenol)carboxyphthiodiolenone synthase] + 2 (S)-methylmalonyl-CoA + 3 malonyl-CoA + 5 NADPH + 10 H(+) = C32-carboxyphthiodiolenone-[(phenol)carboxyphthiodiolenone synthase] + 5 CO2 + 5 NADP(+) + 5 CoA + 2 H2O. It carries out the reaction docosanoyl-[(phenol)carboxyphthiodiolenone synthase] + 2 (S)-methylmalonyl-CoA + 3 malonyl-CoA + 5 NADPH + 10 H(+) = C34-carboxyphthiodiolenone-[(phenol)carboxyphthiodiolenone synthase] + 5 CO2 + 5 NADP(+) + 5 CoA + 2 H2O. It catalyses the reaction 17-(4-hydroxyphenyl)heptadecanoyl-[(phenol)carboxyphthiodiolenone synthase] + 2 (S)-methylmalonyl-CoA + 3 malonyl-CoA + 5 NADPH + 10 H(+) = C35-(phenol)carboxyphthiodiolenone-[(phenol)carboxyphthiodiolenone synthase] + 5 CO2 + 5 NADP(+) + 5 CoA + 2 H2O. The catalysed reaction is 19-(4-hydroxyphenyl)nonadecanoyl-[(phenol)carboxyphthiodiolenone synthase] + 2 (S)-methylmalonyl-CoA + 3 malonyl-CoA + 5 NADPH + 10 H(+) = C37-(phenol)carboxyphthiodiolenone-[(phenol)carboxyphthiodiolenone synthase] + 5 CO2 + 5 NADP(+) + 5 CoA + 2 H2O. It functions in the pathway lipid metabolism; fatty acid biosynthesis. Its function is as follows. Part of the PpsABCDE complex involved in the biosynthesis of the lipid core common to phthiocerols and phenolphthiocerols by successive additions of malonyl-CoA or methylmalonyl-CoA extender units. PpsA can accept as substrate the activated forms of either icosanoyl (C20), docosanoyl (C22) or lignoceroyl (C24) groups from FadD26, or a (4-hydroxyphenyl)-C17 or (4-hydroxyphenyl)-C19 fatty acyl from FadD29. PpsA initiates the biosynthesis and extends its substrate using a malonyl-CoA extender unit. The PpsB and PpsC proteins add the second and third malonyl-CoA extender units. PpsD adds an (R)-methylmalonyl unit and PpsE adds a second (R)-methylmalonyl unit. The incorporation of the methylmalonyl units results in formation of two branched methyl groups in the elongated product. The polypeptide is Phenolphthiocerol/phthiocerol polyketide synthase subunit B (ppsB) (Mycobacterium bovis (strain ATCC BAA-935 / AF2122/97)).